Consider the following 131-residue polypeptide: ATP synthase epsilon chain, chloroplastic (131 aa).

The protein belongs to the ATPase epsilon chain family. In terms of assembly, F-type ATPases have 2 components, CF(1) - the catalytic core - and CF(0) - the membrane proton channel. CF(1) has five subunits: alpha(3), beta(3), gamma(1), delta(1), epsilon(1). CF(0) has three main subunits: a, b and c.

It localises to the plastid. The protein resides in the chloroplast thylakoid membrane. In terms of biological role, produces ATP from ADP in the presence of a proton gradient across the membrane. The polypeptide is ATP synthase epsilon chain, chloroplastic (Cyanidioschyzon merolae (strain NIES-3377 / 10D) (Unicellular red alga)).